The sequence spans 499 residues: MEFSVKNGSVEKQRTACLVVGVYEPRRLSAAAEQLDKLSEGYISTLLRRGDLEGKAGQTLLLHNVPNVPADRVLLVGCGKERELTERQYKQIIQKMVQAVSETGSMEVVCFLTELHVKGRTSYWNVRFAIEAIQESLYSYNDFKSIKPEVRREFRRVIFNVANRKDLADAERALEHGKAISTGVAFAKNVANCPPNVCNPAYLAELAKGLAAEYDNIRTTVIDEAEMAALGMNAYLAVSRGSQNPAYLSVIEYKNHPNPDAKPIVLVGKGLTFDSGGISIKPSDSMDEMKYDMGGAASVYGTMKALAEMKLPLNVIGVLAGCENMPDGNAYRPGDILTTMNGLTVEVLNTDAEGRLVLCDTLTYVERFEPELVIDMATLTGACMIALGAHNSGLMSTSNVLANELLNAAEQADDKAWRLPLGEEYQEQLKSNFADLANIGGRLGGAITAGQFLSNFTKKYSWAHLDIAGTAWKSGAAKGATGRPVSLLSQFLINKANNQ.

K269 and D274 together coordinate Mn(2+). K281 is an active-site residue. The Mn(2+) site is built by D292, D351, and E353. R355 is a catalytic residue.

This sequence belongs to the peptidase M17 family. The cofactor is Mn(2+).

Its subcellular location is the cytoplasm. It carries out the reaction Release of an N-terminal amino acid, Xaa-|-Yaa-, in which Xaa is preferably Leu, but may be other amino acids including Pro although not Arg or Lys, and Yaa may be Pro. Amino acid amides and methyl esters are also readily hydrolyzed, but rates on arylamides are exceedingly low.. The catalysed reaction is Release of an N-terminal amino acid, preferentially leucine, but not glutamic or aspartic acids.. In terms of biological role, presumably involved in the processing and regular turnover of intracellular proteins. Catalyzes the removal of unsubstituted N-terminal amino acids from various peptides. The chain is Probable cytosol aminopeptidase from Actinobacillus pleuropneumoniae serotype 5b (strain L20).